Reading from the N-terminus, the 650-residue chain is DNA gyrase subunit B (650 aa).

A compositionally biased stretch (basic and acidic residues) spans 400-414; the sequence is RRSQEARELTRRKSP. The segment at 400–422 is disordered; the sequence is RRSQEARELTRRKSPFDSGSLPG. In terms of domain architecture, Toprim spans 435–549; that stretch reads SELYIVEGDS…QGNIFIAQPP (115 aa). Mg(2+) contacts are provided by Glu-441, Asp-514, and Asp-516.

Belongs to the type II topoisomerase GyrB family. Heterotetramer, composed of two GyrA and two GyrB chains. In the heterotetramer, GyrA contains the active site tyrosine that forms a transient covalent intermediate with DNA, while GyrB binds cofactors and catalyzes ATP hydrolysis. Mg(2+) serves as cofactor. The cofactor is Mn(2+). Requires Ca(2+) as cofactor.

It is found in the cytoplasm. It catalyses the reaction ATP-dependent breakage, passage and rejoining of double-stranded DNA.. In terms of biological role, a type II topoisomerase that negatively supercoils closed circular double-stranded (ds) DNA in an ATP-dependent manner to modulate DNA topology and maintain chromosomes in an underwound state. Negative supercoiling favors strand separation, and DNA replication, transcription, recombination and repair, all of which involve strand separation. Also able to catalyze the interconversion of other topological isomers of dsDNA rings, including catenanes and knotted rings. Type II topoisomerases break and join 2 DNA strands simultaneously in an ATP-dependent manner. This Mycoplasma genitalium (strain ATCC 33530 / DSM 19775 / NCTC 10195 / G37) (Mycoplasmoides genitalium) protein is DNA gyrase subunit B.